The primary structure comprises 348 residues: Phospho-2-dehydro-3-deoxyheptonate aldolase, Trp-sensitive (348 aa).

It belongs to the class-I DAHP synthase family.

It catalyses the reaction D-erythrose 4-phosphate + phosphoenolpyruvate + H2O = 7-phospho-2-dehydro-3-deoxy-D-arabino-heptonate + phosphate. The protein operates within metabolic intermediate biosynthesis; chorismate biosynthesis; chorismate from D-erythrose 4-phosphate and phosphoenolpyruvate: step 1/7. Functionally, stereospecific condensation of phosphoenolpyruvate (PEP) and D-erythrose-4-phosphate (E4P) giving rise to 3-deoxy-D-arabino-heptulosonate-7-phosphate (DAHP). This Escherichia coli (strain K12) protein is Phospho-2-dehydro-3-deoxyheptonate aldolase, Trp-sensitive (aroH).